The following is a 326-amino-acid chain: MSSENNAGANLVNQFNAAGELTHLLTLEGLPKEQILHILDTAQQFVSVTDPSREVKKVPLLRGKSVFNLFFENSTRTRTTFEIAAKRLSADVINLDISTSSTAKGESLLDTIDNLVAMQADIFVVRHSVSRAPIEIANHVPTHVHVVNAGDGSHQHPTQGLLDMYTMRHFKQNFKGLKVAIVGDIVHSRVAKSNIHALTTLGCEDIRVIGPESLLPSDLDMLGVKVYHSMEEGLKDVDVVMTLRIQKERMEAGQVPEGDAFFNQYGLTPTRLALAKSDAIVMHPGPMNRGVEIDSVVADGPQSVILNQVTFGIAVRMAVMSIVAGN.

Carbamoyl phosphate is bound by residues Arg76 and Thr77. Lys104 lines the L-aspartate pocket. Carbamoyl phosphate-binding residues include Arg126, His156, and Gln159. Residues Arg189 and Arg244 each contribute to the L-aspartate site. Carbamoyl phosphate contacts are provided by Gly285 and Pro286.

Belongs to the aspartate/ornithine carbamoyltransferase superfamily. ATCase family. As to quaternary structure, heterododecamer (2C3:3R2) of six catalytic PyrB chains organized as two trimers (C3), and six regulatory PyrI chains organized as three dimers (R2).

The enzyme catalyses carbamoyl phosphate + L-aspartate = N-carbamoyl-L-aspartate + phosphate + H(+). Its pathway is pyrimidine metabolism; UMP biosynthesis via de novo pathway; (S)-dihydroorotate from bicarbonate: step 2/3. Functionally, catalyzes the condensation of carbamoyl phosphate and aspartate to form carbamoyl aspartate and inorganic phosphate, the committed step in the de novo pyrimidine nucleotide biosynthesis pathway. This Polynucleobacter asymbioticus (strain DSM 18221 / CIP 109841 / QLW-P1DMWA-1) (Polynucleobacter necessarius subsp. asymbioticus) protein is Aspartate carbamoyltransferase catalytic subunit.